The primary structure comprises 699 residues: Condensin complex subunit 2 (699 aa).

Disordered regions lie at residues 1–35 (MSTS…SAAA) and 176–203 (ESQA…KRRK).

It belongs to the CND2 (condensin subunit 2) family. In terms of assembly, component of the condensin complex, which contains the XCAP-E/SMC2 and XCAP-C/SMC4 heterodimer, and three non SMC subunits that probably regulate the complex: XCAP-H/NCAPH, XCAP-D2/NCAPD2 and XCAP-G/NCAPG. In terms of processing, phosphorylated by CDK1. Its phosphorylation, as well as that of XCAP-D2 and XCAP-G subunits, activates the condensin complex and is required for chromosome condensation.

Its subcellular location is the nucleus. The protein resides in the cytoplasm. It is found in the chromosome. Regulatory subunit of the condensin complex, a complex required for conversion of interphase chromatin into mitotic-like condense chromosomes. The condensin complex probably introduces positive supercoils into relaxed DNA in the presence of type I topoisomerases and converts nicked DNA into positive knotted forms in the presence of type II topoisomerase. The protein is Condensin complex subunit 2 (ncaph) of Xenopus laevis (African clawed frog).